Reading from the N-terminus, the 345-residue chain is Probable branched-chain amino acid transport permease protein LivM (345 aa).

Transmembrane regions (helical) follow at residues Ile3–Leu23, Leu42–Ile62, Ile91–Ile111, Ile124–Ile144, Tyr163–Phe183, Ile222–Ile242, Gly269–Tyr289, and Ile297–Leu317.

It belongs to the binding-protein-dependent transport system permease family. LivHM subfamily.

It localises to the cell membrane. Part of the binding-protein-dependent transport system for branched-chain amino acids. Probably responsible for the translocation of the substrates across the membrane. The polypeptide is Probable branched-chain amino acid transport permease protein LivM (livM) (Methanocaldococcus jannaschii (strain ATCC 43067 / DSM 2661 / JAL-1 / JCM 10045 / NBRC 100440) (Methanococcus jannaschii)).